We begin with the raw amino-acid sequence, 255 residues long: MAVISMKQLLEAGVHFGHQTRRWNPKMAKYIFTERNGIHVIDLQQTVKLADQAYEFVRDAAANDAVILFVGTKKQAAEAVADEATRAGQYFINHRWLGGTLTNWGTIQKRITRLKEIKRMEEEGTFEVLPKKEVALLNKQRARLEKFLGGIEDMPRIPDVMYVVDPHKEQIAVKEAKKLGIPVVAMVDTNADPDDIDVIIPANDDAIRAVKLITSKLADAIIEGRQGEDASVEFEADTKADSIEEIVEVVEGDNN.

It belongs to the universal ribosomal protein uS2 family.

The protein is Small ribosomal subunit protein uS2 of Streptococcus uberis (strain ATCC BAA-854 / 0140J).